We begin with the raw amino-acid sequence, 895 residues long: Putative endoplasmic reticulum metallopeptidase 1-B (895 aa).

A disordered region spans residues 1 to 27 (MSTGIRRRHADEKKNILEKESLQNDET). The Cytoplasmic segment spans residues 1-39 (MSTGIRRRHADEKKNILEKESLQNDETQREMEKDISLLR). A compositionally biased stretch (basic and acidic residues) spans 9 to 27 (HADEKKNILEKESLQNDET). Residues 40-60 (PAHWNFIGLFFLVLIIGTTFL) form a helical membrane-spanning segment. At 61 to 374 (HKCLPEPKDP…KPAEYADRKT (314 aa)) the chain is on the lumenal side. Asn156 carries an N-linked (GlcNAc...) asparagine glycan. His180 and Asp192 together coordinate Zn(2+). Glu226 acts as the Proton acceptor in catalysis. Zn(2+) contacts are provided by Glu227, Glu253, and His329. Residues 375-395 (VFFDFLGLFVIIYPLSIAHLV) traverse the membrane as a helical segment. The Cytoplasmic segment spans residues 396–424 (NMLTICTVIALMSHRFYSKTFITFLALRD). Residues 425–445 (YVLTILTIALVLKAMTFMSLF) form a helical membrane-spanning segment. Over 446-457 (TYGALRWYTRHW) the chain is Lumenal. The chain crosses the membrane as a helical span at residues 458 to 478 (LALVAYGLPSVWAGISVQGLL). The Cytoplasmic portion of the chain corresponds to 479–489 (TARLAPKAREE). A helical transmembrane segment spans residues 490–512 (YGSTLELIHLTLISGILLAFTYY). The Lumenal segment spans residues 513–515 (DIA). The chain crosses the membrane as a helical span at residues 516-538 (SGFLFALLLVPAIKSIITYFGAW). Residues 539–553 (PTCPTFNTILTLILS) lie on the Cytoplasmic side of the membrane. A helical transmembrane segment spans residues 554–574 (FPGCAMAIYTTEMLLSIFIPI). At 575–584 (MGRSSYNPEP) the chain is on the lumenal side. Residues 585 to 605 (AVSFFVAFSAGCIVLSLGGLV) traverse the membrane as a helical segment. The Cytoplasmic portion of the chain corresponds to 606–619 (AKSRNSRSSNEAGL). Residues 620–640 (LELIYNILGVLLVTLTILYVF) form a helical membrane-spanning segment. At 641 to 895 (SSFWPSPYRF…WNVDQVYKYF (255 aa)) the chain is on the lumenal side. 2 N-linked (GlcNAc...) asparagine glycosylation sites follow: Asn679 and Asn796.

The protein belongs to the peptidase M28 family. Zn(2+) serves as cofactor.

It localises to the endoplasmic reticulum membrane. The chain is Putative endoplasmic reticulum metallopeptidase 1-B from Caenorhabditis elegans.